The following is an 893-amino-acid chain: Protein translocase subunit SecA (893 aa).

Residues Gln87, 105-109 (GEGKT), and Asp512 contribute to the ATP site. The segment covering 840–849 (VEEQHRKSEE) has biased composition (basic and acidic residues). The segment at 840–893 (VEEQHRKSEEVPMDFQHQSASSPSEQAQTPRVGRNEPCPCGSGKKYKQCHGKLA) is disordered. The span at 855-868 (QHQSASSPSEQAQT) shows a compositional bias: polar residues. The Zn(2+) site is built by Cys877, Cys879, Cys888, and His889. Positions 883 to 893 (KKYKQCHGKLA) are enriched in basic residues.

Belongs to the SecA family. In terms of assembly, monomer and homodimer. Part of the essential Sec protein translocation apparatus which comprises SecA, SecYEG and auxiliary proteins SecDF-YajC and YidC. It depends on Zn(2+) as a cofactor.

It is found in the cell inner membrane. The protein resides in the cytoplasm. It catalyses the reaction ATP + H2O + cellular proteinSide 1 = ADP + phosphate + cellular proteinSide 2.. Its function is as follows. Part of the Sec protein translocase complex. Interacts with the SecYEG preprotein conducting channel. Has a central role in coupling the hydrolysis of ATP to the transfer of proteins into and across the cell membrane, serving both as a receptor for the preprotein-SecB complex and as an ATP-driven molecular motor driving the stepwise translocation of polypeptide chains across the membrane. This chain is Protein translocase subunit SecA, found in Colwellia psychrerythraea (strain 34H / ATCC BAA-681) (Vibrio psychroerythus).